A 201-amino-acid polypeptide reads, in one-letter code: Pyridoxal 5'-phosphate synthase subunit PdxT (201 aa).

49 to 51 (GES) provides a ligand contact to L-glutamine. The active-site Nucleophile is the cysteine 81. Residues arginine 110 and 139-140 (IR) contribute to the L-glutamine site. Active-site charge relay system residues include histidine 180 and glutamate 182.

The protein belongs to the glutaminase PdxT/SNO family. As to quaternary structure, in the presence of PdxS, forms a dodecamer of heterodimers. Only shows activity in the heterodimer.

The catalysed reaction is aldehydo-D-ribose 5-phosphate + D-glyceraldehyde 3-phosphate + L-glutamine = pyridoxal 5'-phosphate + L-glutamate + phosphate + 3 H2O + H(+). The enzyme catalyses L-glutamine + H2O = L-glutamate + NH4(+). The protein operates within cofactor biosynthesis; pyridoxal 5'-phosphate biosynthesis. In terms of biological role, catalyzes the hydrolysis of glutamine to glutamate and ammonia as part of the biosynthesis of pyridoxal 5'-phosphate. The resulting ammonia molecule is channeled to the active site of PdxS. This Salinispora tropica (strain ATCC BAA-916 / DSM 44818 / JCM 13857 / NBRC 105044 / CNB-440) protein is Pyridoxal 5'-phosphate synthase subunit PdxT.